The chain runs to 211 residues: Cytidylate kinase (211 aa).

9-17 (GPAAAGKGT) lines the ATP pocket.

The protein belongs to the cytidylate kinase family. Type 1 subfamily.

Its subcellular location is the cytoplasm. It carries out the reaction CMP + ATP = CDP + ADP. It catalyses the reaction dCMP + ATP = dCDP + ADP. The chain is Cytidylate kinase from Paramagnetospirillum magneticum (strain ATCC 700264 / AMB-1) (Magnetospirillum magneticum).